The chain runs to 227 residues: MKFAVIVFPGSNCDVDMFHAIKDELGEEVDYVWHDTENLDEYDAILLPGGFSYGDYLRCGAISRFANAMKAVQKAAEQGKPILGVCNGFQILVESGLLPGALMRNENLKFMCRTVQLRVENNETMFTSQYEKDEVINIPIAHGEGNYYCDEETLKQLEENNQIAFRYVENPNGSVSDIAGIVNEKGNVLGMMPHPERAVDELLGGAEGLKVFQSILKQWRETYVVNA.

The Glutamine amidotransferase type-1 domain maps to 3 to 225 (FAVIVFPGSN…LKQWRETYVV (223 aa)). Catalysis depends on Cys-86, which acts as the Nucleophile. Active-site residues include His-194 and Glu-196.

Part of the FGAM synthase complex composed of 1 PurL, 1 PurQ and 2 PurS subunits.

It localises to the cytoplasm. It catalyses the reaction N(2)-formyl-N(1)-(5-phospho-beta-D-ribosyl)glycinamide + L-glutamine + ATP + H2O = 2-formamido-N(1)-(5-O-phospho-beta-D-ribosyl)acetamidine + L-glutamate + ADP + phosphate + H(+). The enzyme catalyses L-glutamine + H2O = L-glutamate + NH4(+). Its pathway is purine metabolism; IMP biosynthesis via de novo pathway; 5-amino-1-(5-phospho-D-ribosyl)imidazole from N(2)-formyl-N(1)-(5-phospho-D-ribosyl)glycinamide: step 1/2. Functionally, part of the phosphoribosylformylglycinamidine synthase complex involved in the purines biosynthetic pathway. Catalyzes the ATP-dependent conversion of formylglycinamide ribonucleotide (FGAR) and glutamine to yield formylglycinamidine ribonucleotide (FGAM) and glutamate. The FGAM synthase complex is composed of three subunits. PurQ produces an ammonia molecule by converting glutamine to glutamate. PurL transfers the ammonia molecule to FGAR to form FGAM in an ATP-dependent manner. PurS interacts with PurQ and PurL and is thought to assist in the transfer of the ammonia molecule from PurQ to PurL. This chain is Phosphoribosylformylglycinamidine synthase subunit PurQ, found in Bacillus anthracis (strain A0248).